The chain runs to 564 residues: Septation ring formation regulator EzrA (564 aa).

Residues 1-4 (MVLF) lie on the Extracellular side of the membrane. Residues 5 to 23 (IILAILVVILIAIGVLFYM) traverse the membrane as a helical segment. The Cytoplasmic portion of the chain corresponds to 24–564 (RSNKRNLIEK…KHIEEQVIKE (541 aa)). Coiled-coil stretches lie at residues 84–126 (VEEK…HQVT), 165–223 (EAAE…LIRE), 271–303 (MISR…YEVK), and 350–435 (VRQF…RRLL).

It belongs to the EzrA family.

It is found in the cell membrane. Functionally, negative regulator of FtsZ ring formation; modulates the frequency and position of FtsZ ring formation. Inhibits FtsZ ring formation at polar sites. Interacts either with FtsZ or with one of its binding partners to promote depolymerization. The chain is Septation ring formation regulator EzrA from Staphylococcus epidermidis (strain ATCC 35984 / DSM 28319 / BCRC 17069 / CCUG 31568 / BM 3577 / RP62A).